A 447-amino-acid polypeptide reads, in one-letter code: UDP-N-acetylmuramoyl-L-alanyl-D-glutamate--2,6-diaminopimelate ligase (447 aa).

T21 provides a ligand contact to UDP-N-acetyl-alpha-D-muramoyl-L-alanyl-D-glutamate. An ATP-binding site is contributed by 74–80 (GTNGKTT). UDP-N-acetyl-alpha-D-muramoyl-L-alanyl-D-glutamate-binding positions include 117–118 (TT), S144, Q150, and R152. K184 carries the post-translational modification N6-carboxylysine. Residues R340, 364 to 367 (DNPR), G415, and E419 contribute to the meso-2,6-diaminopimelate site. A Meso-diaminopimelate recognition motif motif is present at residues 364–367 (DNPR).

The protein belongs to the MurCDEF family. MurE subfamily. Mg(2+) is required as a cofactor. Post-translationally, carboxylation is probably crucial for Mg(2+) binding and, consequently, for the gamma-phosphate positioning of ATP.

Its subcellular location is the cytoplasm. It carries out the reaction UDP-N-acetyl-alpha-D-muramoyl-L-alanyl-D-glutamate + meso-2,6-diaminopimelate + ATP = UDP-N-acetyl-alpha-D-muramoyl-L-alanyl-gamma-D-glutamyl-meso-2,6-diaminopimelate + ADP + phosphate + H(+). The protein operates within cell wall biogenesis; peptidoglycan biosynthesis. In terms of biological role, catalyzes the addition of meso-diaminopimelic acid to the nucleotide precursor UDP-N-acetylmuramoyl-L-alanyl-D-glutamate (UMAG) in the biosynthesis of bacterial cell-wall peptidoglycan. In Helicobacter pylori (strain J99 / ATCC 700824) (Campylobacter pylori J99), this protein is UDP-N-acetylmuramoyl-L-alanyl-D-glutamate--2,6-diaminopimelate ligase.